The primary structure comprises 365 residues: Cobalt-precorrin-5B C(1)-methyltransferase (365 aa).

It belongs to the CbiD family.

The catalysed reaction is Co-precorrin-5B + S-adenosyl-L-methionine = Co-precorrin-6A + S-adenosyl-L-homocysteine. Its pathway is cofactor biosynthesis; adenosylcobalamin biosynthesis; cob(II)yrinate a,c-diamide from sirohydrochlorin (anaerobic route): step 6/10. Functionally, catalyzes the methylation of C-1 in cobalt-precorrin-5B to form cobalt-precorrin-6A. This Methanococcus maripaludis (strain C6 / ATCC BAA-1332) protein is Cobalt-precorrin-5B C(1)-methyltransferase.